The sequence spans 714 residues: FERM domain-containing protein 7 (714 aa).

Positions 2-282 constitute an FERM domain; it reads LHLKVQFLDD…EYHAFFRLSE (281 aa). Positions 537 to 558 form a coiled coil; it reads NIRMKSFQQDLQVLQEAIARTS.

In terms of tissue distribution, expressed in liver, kidney, pancreas and at low levels in brain and heart. Expressed in embryonic brain and developing neural retina.

The protein localises to the cell projection. It is found in the neuron projection. It localises to the growth cone. In terms of biological role, plays a role in neurite development, may be through the activation of the GTPase RAC1. Plays a role in the control of eye movement and gaze stability. In Homo sapiens (Human), this protein is FERM domain-containing protein 7 (FRMD7).